The primary structure comprises 407 residues: Probable beta-1,3-galactosyltransferase 4 (407 aa).

Residues 23–39 (WTLFLCIGFFCAGILFS) traverse the membrane as a helical; Signal-anchor for type II membrane protein segment.

Belongs to the glycosyltransferase 31 family. Mn(2+) is required as a cofactor.

The protein localises to the golgi apparatus membrane. It functions in the pathway protein modification; protein glycosylation. Its function is as follows. Beta-1,3-galactosyltransferase that transfers galactose from UDP-galactose to substrates with a terminal glycosyl residue. In Arabidopsis thaliana (Mouse-ear cress), this protein is Probable beta-1,3-galactosyltransferase 4 (B3GALT4).